The sequence spans 143 residues: Large ribosomal subunit protein uL13 (143 aa).

This sequence belongs to the universal ribosomal protein uL13 family. Part of the 50S ribosomal subunit.

This protein is one of the early assembly proteins of the 50S ribosomal subunit, although it is not seen to bind rRNA by itself. It is important during the early stages of 50S assembly. This Neisseria meningitidis serogroup C (strain 053442) protein is Large ribosomal subunit protein uL13.